An 837-amino-acid polypeptide reads, in one-letter code: Protein translocase subunit SecA 1 (837 aa).

ATP contacts are provided by residues Q85, 103-107, and D493; that span reads GEGKT. Zn(2+) contacts are provided by C821, C823, C832, and H833.

The protein belongs to the SecA family. Monomer and homodimer. Part of the essential Sec protein translocation apparatus which comprises SecA, SecYEG and auxiliary proteins SecDF. Other proteins may also be involved. Zn(2+) is required as a cofactor.

The protein localises to the cell membrane. It is found in the cytoplasm. It carries out the reaction ATP + H2O + cellular proteinSide 1 = ADP + phosphate + cellular proteinSide 2.. Its function is as follows. Part of the Sec protein translocase complex. Interacts with the SecYEG preprotein conducting channel. Has a central role in coupling the hydrolysis of ATP to the transfer of proteins into and across the cell membrane, serving as an ATP-driven molecular motor driving the stepwise translocation of polypeptide chains across the membrane. In Streptococcus pneumoniae serotype 4 (strain ATCC BAA-334 / TIGR4), this protein is Protein translocase subunit SecA 1.